Consider the following 313-residue polypeptide: Olfactory receptor 1D2 (313 aa).

Residues 1-25 (MDGGNQSEGSEFLLLGMSESPEQQR) lie on the Extracellular side of the membrane. A glycan (N-linked (GlcNAc...) asparagine) is linked at asparagine 5. Residues 26–49 (ILFWMFLSMYLVTVLGNVLIILAI) traverse the membrane as a helical segment. Topologically, residues 50–57 (SSDSRLHT) are cytoplasmic. Residues 58–79 (PMYFFLANLSFTDLFFVTNTIP) traverse the membrane as a helical segment. The Extracellular segment spans residues 80-100 (KMLVNLQSQDKAISYAGCLTQ). Cysteine 97 and cysteine 189 are joined by a disulfide. A helical membrane pass occupies residues 101–120 (LYFLLSLVTLDNLILAVMAY). Residues 121–139 (DRYVAICCPLHYVTAMSPR) are Cytoplasmic-facing. Residues 140–158 (LCILLLSLCWVFSVLYGLI) form a helical membrane-spanning segment. The Extracellular segment spans residues 159–196 (HTLLMTRVTFCGSRKIHYLFCEMYFLLRLACSNIQINH). N-linked (GlcNAc...) asparagine glycosylation is present at asparagine 195. The helical transmembrane segment at 197-219 (TVLXATGCFIFLIPLGFMIXSYA) threads the bilayer. At 220-236 (RIVRAILRIPSATGKYK) the chain is on the cytoplasmic side. A helical transmembrane segment spans residues 237–259 (AFSTCASHLAVVSLFYGTLGMVY). The Extracellular portion of the chain corresponds to 260–271 (LQPLQTYSTKDS). Residues 272 to 291 (VATVMYAVVTPMMNPFIYSL) form a helical membrane-spanning segment. The Cytoplasmic portion of the chain corresponds to 292-313 (RNKDIHGALGRLLQGKAFQKLT).

It belongs to the G-protein coupled receptor 1 family.

The protein resides in the cell membrane. Functionally, odorant receptor. The sequence is that of Olfactory receptor 1D2 (OR1D2) from Pongo pygmaeus (Bornean orangutan).